Consider the following 320-residue polypeptide: Zona pellucida-binding protein 1 (320 aa).

Residues asparagine 85 and asparagine 158 are each glycosylated (N-linked (GlcNAc...) asparagine).

Belongs to the zona pellucida-binding protein Sp38 family.

Its subcellular location is the cytoplasmic vesicle. It is found in the secretory vesicle. The protein resides in the acrosome. The protein localises to the secreted. It localises to the acrosome membrane. Functionally, plays a role in sperm morphogenesis and in sperm-oocyte interaction during fertilization. This Gallus gallus (Chicken) protein is Zona pellucida-binding protein 1 (ZPBP1).